The sequence spans 34 residues: Photosystem II reaction center protein Psb30 (34 aa).

A helical transmembrane segment spans residues 6-26 (VIGQLLSATLIVLAGPAVIFV).

This sequence belongs to the Psb30/Ycf12 family. In terms of assembly, PSII is composed of 1 copy each of membrane proteins PsbA, PsbB, PsbC, PsbD, PsbE, PsbF, PsbH, PsbI, PsbJ, PsbK, PsbL, PsbM, PsbT, PsbX, PsbY, PsbZ, Psb30/Ycf12, peripheral proteins of the oxygen-evolving complex and a large number of cofactors. It forms dimeric complexes.

It is found in the plastid. It localises to the chloroplast thylakoid membrane. Its function is as follows. A core subunit of photosystem II (PSII), probably helps stabilize the reaction center. This is Photosystem II reaction center protein Psb30 from Heterosigma akashiwo (strain NIES-293 / 8280G21-1).